The sequence spans 379 residues: Orotidine 5'-phosphate decarboxylase (379 aa).

Residues D42, 64 to 66, and 99 to 108 each bind substrate; these read KTH and DRKFGDIGHT. K101 functions as the Proton donor in the catalytic mechanism. Residues 165–198 form a disordered region; that stretch reads PTMDQFDDAEDAKDDEPATVNDNGSNMMEKPIYA. Residues 169–178 show a composition bias toward acidic residues; that stretch reads QFDDAEDAKD. Substrate-binding residues include Y331 and R350.

It belongs to the OMP decarboxylase family.

The enzyme catalyses orotidine 5'-phosphate + H(+) = UMP + CO2. It participates in pyrimidine metabolism; UMP biosynthesis via de novo pathway; UMP from orotate: step 2/2. This chain is Orotidine 5'-phosphate decarboxylase (pyr4), found in Hypocrea atroviridis (Trichoderma atroviride).